The sequence spans 315 residues: Ribosomal RNA small subunit methyltransferase H (315 aa).

S-adenosyl-L-methionine is bound by residues 33–35 (AGH), Asp-53, Phe-80, Asp-101, and Gln-108.

The protein belongs to the methyltransferase superfamily. RsmH family.

The protein resides in the cytoplasm. The enzyme catalyses cytidine(1402) in 16S rRNA + S-adenosyl-L-methionine = N(4)-methylcytidine(1402) in 16S rRNA + S-adenosyl-L-homocysteine + H(+). Functionally, specifically methylates the N4 position of cytidine in position 1402 (C1402) of 16S rRNA. The chain is Ribosomal RNA small subunit methyltransferase H from Natranaerobius thermophilus (strain ATCC BAA-1301 / DSM 18059 / JW/NM-WN-LF).